Here is a 95-residue protein sequence, read N- to C-terminus: Histone-like DNA-binding protein (95 aa).

It belongs to the bacterial histone-like protein family.

This chain is Histone-like DNA-binding protein, found in Rickettsia typhi (strain ATCC VR-144 / Wilmington).